The sequence spans 1220 residues: DNA-directed RNA polymerase subunit beta' (1220 aa).

Zn(2+)-binding residues include C60, C62, C75, and C78. Mg(2+)-binding residues include D449, D451, and D453. Residues C818, C892, C899, and C902 each contribute to the Zn(2+) site.

It belongs to the RNA polymerase beta' chain family. As to quaternary structure, the RNAP catalytic core consists of 2 alpha, 1 beta, 1 beta' and 1 omega subunit. When a sigma factor is associated with the core the holoenzyme is formed, which can initiate transcription. Requires Mg(2+) as cofactor. The cofactor is Zn(2+).

The catalysed reaction is RNA(n) + a ribonucleoside 5'-triphosphate = RNA(n+1) + diphosphate. In terms of biological role, DNA-dependent RNA polymerase catalyzes the transcription of DNA into RNA using the four ribonucleoside triphosphates as substrates. This Lacticaseibacillus paracasei (strain ATCC 334 / BCRC 17002 / CCUG 31169 / CIP 107868 / KCTC 3260 / NRRL B-441) (Lactobacillus paracasei) protein is DNA-directed RNA polymerase subunit beta'.